Consider the following 56-residue polypeptide: Ovomucoid (56 aa).

Residues 6 to 56 form the Kazal-like domain; sequence VDCSEYPKPDCTLEYRPLCGSDNKTYASKCNFCNAVVESNGTLTLSHFGKC. Cystine bridges form between Cys-8/Cys-38, Cys-16/Cys-35, and Cys-24/Cys-56. Asn-45 is a glycosylation site (N-linked (GlcNAc...) asparagine).

It is found in the secreted. In Callipepla squamata pallida (Blue scaled quail), this protein is Ovomucoid.